Consider the following 222-residue polypeptide: Small ribosomal subunit protein uS3 (222 aa).

The KH type-2 domain occupies 39 to 108 (IRKFIKKELF…NVLINIVEVK (70 aa)).

This sequence belongs to the universal ribosomal protein uS3 family. As to quaternary structure, part of the 30S ribosomal subunit. Forms a tight complex with proteins S10 and S14.

In terms of biological role, binds the lower part of the 30S subunit head. Binds mRNA in the 70S ribosome, positioning it for translation. This is Small ribosomal subunit protein uS3 from Clostridium perfringens (strain ATCC 13124 / DSM 756 / JCM 1290 / NCIMB 6125 / NCTC 8237 / Type A).